We begin with the raw amino-acid sequence, 298 residues long: ATP synthase gamma chain (298 aa).

Belongs to the ATPase gamma chain family. F-type ATPases have 2 components, CF(1) - the catalytic core - and CF(0) - the membrane proton channel. CF(1) has five subunits: alpha(3), beta(3), gamma(1), delta(1), epsilon(1). CF(0) has three main subunits: a, b and c.

It localises to the cell membrane. In terms of biological role, produces ATP from ADP in the presence of a proton gradient across the membrane. The gamma chain is believed to be important in regulating ATPase activity and the flow of protons through the CF(0) complex. This Mycobacterium leprae (strain Br4923) protein is ATP synthase gamma chain.